A 399-amino-acid polypeptide reads, in one-letter code: 3-methyl-2-oxobutanoate hydroxymethyltransferase 2, mitochondrial (399 aa).

A mitochondrion-targeting transit peptide spans 1–90 (MSFSRLLTPR…ARRVTLATLR (90 aa)). Mg(2+)-binding residues include aspartate 125 and aspartate 164. 3-methyl-2-oxobutanoate-binding positions include 125–126 (DS), aspartate 164, and lysine 194. Position 196 (glutamate 196) interacts with Mg(2+). Glutamate 264 acts as the Proton acceptor in catalysis.

This sequence belongs to the PanB family. Mg(2+) serves as cofactor.

It is found in the mitochondrion. It catalyses the reaction 3-methyl-2-oxobutanoate + (6R)-5,10-methylene-5,6,7,8-tetrahydrofolate + H2O = 2-dehydropantoate + (6S)-5,6,7,8-tetrahydrofolate. The protein operates within cofactor biosynthesis; (R)-pantothenate biosynthesis; (R)-pantoate from 3-methyl-2-oxobutanoate: step 1/2. In terms of biological role, catalyzes the reversible reaction in which hydroxymethyl group from 5,10-methylenetetrahydrofolate is transferred onto alpha-ketoisovalerate to form ketopantoate. The polypeptide is 3-methyl-2-oxobutanoate hydroxymethyltransferase 2, mitochondrial (KPHMT2) (Oryza sativa subsp. japonica (Rice)).